Reading from the N-terminus, the 417-residue chain is Fatty-acid peroxygenase (417 aa).

A heme-binding site is contributed by Cys-363.

The protein belongs to the cytochrome P450 family. Requires heme as cofactor.

The enzyme catalyses a 1,2-saturated fatty acid + H2O2 = a 2-hydroxy fatty acid + H2O. It catalyses the reaction a 2,3-saturated fatty acid + H2O2 = a 3-hydroxy fatty acid + H2O. It carries out the reaction tetradecanoate + H2O2 = (3R)-hydroxytetradecanoate + H2O. The catalysed reaction is tetradecanoate + H2O2 = (2R)-hydroxytetradecanoate + H2O. The enzyme catalyses tetradecanoate + H2O2 = (2S)-hydroxytetradecanoate + H2O. In terms of biological role, catalyzes the alpha- and beta-hydroxylation of myristic acid in the presence of hydrogen peroxide. The protein is Fatty-acid peroxygenase (cypC) of Bacillus subtilis (strain 168).